The chain runs to 556 residues: Formate--tetrahydrofolate ligase (556 aa).

Thr-65–Ser-72 lines the ATP pocket.

The protein belongs to the formate--tetrahydrofolate ligase family.

It catalyses the reaction (6S)-5,6,7,8-tetrahydrofolate + formate + ATP = (6R)-10-formyltetrahydrofolate + ADP + phosphate. Its pathway is one-carbon metabolism; tetrahydrofolate interconversion. This Streptococcus pneumoniae (strain ATCC 700669 / Spain 23F-1) protein is Formate--tetrahydrofolate ligase.